A 203-amino-acid chain; its full sequence is ATP phosphoribosyltransferase (203 aa).

It belongs to the ATP phosphoribosyltransferase family. Short subfamily. Heteromultimer composed of HisG and HisZ subunits.

The protein resides in the cytoplasm. The catalysed reaction is 1-(5-phospho-beta-D-ribosyl)-ATP + diphosphate = 5-phospho-alpha-D-ribose 1-diphosphate + ATP. Its pathway is amino-acid biosynthesis; L-histidine biosynthesis; L-histidine from 5-phospho-alpha-D-ribose 1-diphosphate: step 1/9. Its function is as follows. Catalyzes the condensation of ATP and 5-phosphoribose 1-diphosphate to form N'-(5'-phosphoribosyl)-ATP (PR-ATP). Has a crucial role in the pathway because the rate of histidine biosynthesis seems to be controlled primarily by regulation of HisG enzymatic activity. The protein is ATP phosphoribosyltransferase of Campylobacter fetus subsp. fetus (strain 82-40).